The sequence spans 493 residues: MTRALCSALRQALLLLAAAAELSPGLKCVCLLCDSSNFTCQTEGACWASVMLTNGKEQVIKSCVSLPELNAQVFCHSSNNVTKTECCFTDFCNNITLHLPTASPNAPKLGPMELAIIITVPVCLLSIAAMLTVWACQGRQCSYRKKKRPNVEEPLSECNLVNAGKTLKDLIYDVTASGSGSGLPLLVQRTIARTIVLQEIVGKGRFGEVWHGRWCGEDVAVKIFSSRDERSWFREAEIYQTVMLRHENILGFIAADNKDNGTWTQLWLVSEYHEQGSLYDYLNRNIVTVAGMIKLALSIASGLAHLHMEIVGTQGKPAIAHRDIKSKNILVKKCETCAIADLGLAVKHDSILNTIDIPQNPKVGTKRYMAPEMLDDTMNVNIFESFKRADIYSVGLVYWEIARRCSVGGIVEEYQLPYYDMVPSDPSIEEMRKVVCDQKFRPSIPNQWQSCEALRVMGRIMRECWYANGAARLTALRIKKTISQLCVKEDCKA.

Residues 1–20 (MTRALCSALRQALLLLAAAA) form the signal peptide. At 22–113 (LSPGLKCVCL…PNAPKLGPME (92 aa)) the chain is on the extracellular side. A helical transmembrane segment spans residues 114-134 (LAIIITVPVCLLSIAAMLTVW). Topologically, residues 135-493 (ACQGRQCSYR…QLCVKEDCKA (359 aa)) are cytoplasmic. The GS domain occupies 165–194 (KTLKDLIYDVTASGSGSGLPLLVQRTIART). Residues 195–485 (IVLQEIVGKG…LRIKKTISQL (291 aa)) enclose the Protein kinase domain. ATP-binding positions include 201–209 (VGKGRFGEV) and Lys-222. The Proton acceptor role is filled by Asp-323.

The protein belongs to the protein kinase superfamily. TKL Ser/Thr protein kinase family. TGFB receptor subfamily. As to quaternary structure, binds the type 2 receptor protein ACVR2A. Mg(2+) is required as a cofactor. It depends on Mn(2+) as a cofactor. In terms of tissue distribution, present in pancreas, heart, colon, small intestine, ovary and the hippocampus, medulla oblongata and putamen of the brain. Isoform 1, isoform 2, isoform 3 and isoform 4 are all expressed in the placenta throughout pregnancy.

The protein resides in the membrane. The catalysed reaction is L-threonyl-[receptor-protein] + ATP = O-phospho-L-threonyl-[receptor-protein] + ADP + H(+). It carries out the reaction L-seryl-[receptor-protein] + ATP = O-phospho-L-seryl-[receptor-protein] + ADP + H(+). Functionally, serine/threonine protein kinase which forms a receptor complex on ligand binding. The receptor complex consists of 2 type II and 2 type I transmembrane serine/threonine kinases. Type II receptors phosphorylate and activate type I receptors which autophosphorylate, then bind and activate SMAD transcriptional regulators, SMAD2 and SMAD3. Receptor for activin AB, activin B, activin E and NODAL. Upon NODAL binding, activation results in increased apoptosis and reduced proliferation through suppression of AKT signaling and the activation of Smad2-dependent signaling pathway in pancreatic beta-cells, trophoblasts, epithelial or neuronal cells. Acts as a positive regulator for macrophage activation partially through down-regulation of PPARG expression. This is Activin receptor type-1C from Homo sapiens (Human).